A 157-amino-acid polypeptide reads, in one-letter code: MKTPNTKMNVESFNLDHTKVKAPYVRIADRKKGINGDLIVKYDVRFKQPNQEHMDMPSLHSLEHLVAEIIRNHANYVVDWSPMGCQTGFYLTVLNHDNYTEILEVLEKTMQDVLKATEVPASNEKQCGWAANHTLEGAKNLAHAFLSKRDEWSEIGI.

H60, H64, and C127 together coordinate Fe cation.

This sequence belongs to the LuxS family. Homodimer. It depends on Fe cation as a cofactor.

It carries out the reaction S-(5-deoxy-D-ribos-5-yl)-L-homocysteine = (S)-4,5-dihydroxypentane-2,3-dione + L-homocysteine. In terms of biological role, involved in the synthesis of autoinducer 2 (AI-2) which is secreted by bacteria and is used to communicate both the cell density and the metabolic potential of the environment. The regulation of gene expression in response to changes in cell density is called quorum sensing. Catalyzes the transformation of S-ribosylhomocysteine (RHC) to homocysteine (HC) and 4,5-dihydroxy-2,3-pentadione (DPD). This is S-ribosylhomocysteine lyase from Helicobacter acinonychis (strain Sheeba).